The chain runs to 242 residues: Probable transcriptional regulatory protein Cthe_2075 (242 aa).

It belongs to the TACO1 family.

It is found in the cytoplasm. This is Probable transcriptional regulatory protein Cthe_2075 from Acetivibrio thermocellus (strain ATCC 27405 / DSM 1237 / JCM 9322 / NBRC 103400 / NCIMB 10682 / NRRL B-4536 / VPI 7372) (Clostridium thermocellum).